Here is a 140-residue protein sequence, read N- to C-terminus: Cystatin-C (140 aa).

Residues methionine 1–alanine 20 form the signal peptide. A Secondary area of contact motif is present at residues glutamine 75–glycine 79. Intrachain disulfides connect cysteine 93–cysteine 103 and cysteine 117–cysteine 137. An N-linked (GlcNAc...) asparagine glycan is attached at asparagine 99.

The protein belongs to the cystatin family.

Its subcellular location is the secreted. Functionally, as an inhibitor of cysteine proteinases, this protein is thought to serve an important physiological role as a local regulator of this enzyme activity. Known to inhibit cathepsin B, H, and L. The chain is Cystatin-C (Cst3) from Rattus norvegicus (Rat).